The primary structure comprises 390 residues: 1-deoxy-D-xylulose 5-phosphate reductoisomerase (390 aa).

NADPH is bound by residues T10, G11, S12, I13, G36, R37, N38, and N121. Position 122 (K122) interacts with 1-deoxy-D-xylulose 5-phosphate. An NADPH-binding site is contributed by E123. Position 147 (D147) interacts with Mn(2+). 1-deoxy-D-xylulose 5-phosphate-binding residues include S148, E149, S173, and H196. E149 provides a ligand contact to Mn(2+). NADPH is bound at residue G202. Residues S209, N214, K215, and E218 each contribute to the 1-deoxy-D-xylulose 5-phosphate site. E218 serves as a coordination point for Mn(2+). The interval 367 to 390 is disordered; that stretch reads AASEHGRREAEKRVGARAHAPAGR. A compositionally biased stretch (basic and acidic residues) spans 370-380; the sequence is EHGRREAEKRV.

This sequence belongs to the DXR family. The cofactor is Mg(2+). Mn(2+) serves as cofactor.

It carries out the reaction 2-C-methyl-D-erythritol 4-phosphate + NADP(+) = 1-deoxy-D-xylulose 5-phosphate + NADPH + H(+). It participates in isoprenoid biosynthesis; isopentenyl diphosphate biosynthesis via DXP pathway; isopentenyl diphosphate from 1-deoxy-D-xylulose 5-phosphate: step 1/6. Catalyzes the NADPH-dependent rearrangement and reduction of 1-deoxy-D-xylulose-5-phosphate (DXP) to 2-C-methyl-D-erythritol 4-phosphate (MEP). In Anaeromyxobacter sp. (strain K), this protein is 1-deoxy-D-xylulose 5-phosphate reductoisomerase.